A 160-amino-acid polypeptide reads, in one-letter code: Cytochrome b6-f complex subunit 4 (160 aa).

Transmembrane regions (helical) follow at residues 36 to 56 (LLYI…GLAI), 95 to 115 (LLGV…PFLE), and 131 to 151 (TVFL…TLPI).

It belongs to the cytochrome b family. PetD subfamily. In terms of assembly, the 4 large subunits of the cytochrome b6-f complex are cytochrome b6, subunit IV (17 kDa polypeptide, petD), cytochrome f and the Rieske protein, while the 4 small subunits are petG, petL, petM and petN. The complex functions as a dimer.

Its subcellular location is the plastid. It localises to the chloroplast thylakoid membrane. In terms of biological role, component of the cytochrome b6-f complex, which mediates electron transfer between photosystem II (PSII) and photosystem I (PSI), cyclic electron flow around PSI, and state transitions. This is Cytochrome b6-f complex subunit 4 from Acorus calamus (Sweet flag).